The primary structure comprises 607 residues: UvrABC system protein C (607 aa).

The GIY-YIG domain occupies 16–94 (ARPGVYRMFD…IKQWRPPYNI (79 aa)). The UVR domain occupies 203–238 (QQLGNELNAEMEKAAMALNFEKAAELRDQIALLRRV).

This sequence belongs to the UvrC family. In terms of assembly, interacts with UvrB in an incision complex.

It is found in the cytoplasm. In terms of biological role, the UvrABC repair system catalyzes the recognition and processing of DNA lesions. UvrC both incises the 5' and 3' sides of the lesion. The N-terminal half is responsible for the 3' incision and the C-terminal half is responsible for the 5' incision. This Pseudomonas putida (strain W619) protein is UvrABC system protein C.